Reading from the N-terminus, the 91-residue chain is Cell division protein FtsB (91 aa).

Residues 1 to 3 (MKW) lie on the Cytoplasmic side of the membrane. The helical transmembrane segment at 4-21 (LVAVLVVFVAMFQYRLWV) threads the bilayer. At 22–91 (GEGSIADVVR…ETFFMIIDDQ (70 aa)) the chain is on the periplasmic side. Positions 23–63 (EGSIADVVRLEREIARQEADNERLRERNKQLAAEVDALKTG) form a coiled coil.

This sequence belongs to the FtsB family. Part of a complex composed of FtsB, FtsL and FtsQ.

The protein localises to the cell inner membrane. Functionally, essential cell division protein. May link together the upstream cell division proteins, which are predominantly cytoplasmic, with the downstream cell division proteins, which are predominantly periplasmic. This is Cell division protein FtsB from Teredinibacter turnerae (strain ATCC 39867 / T7901).